A 4168-amino-acid chain; its full sequence is MEPEDLPWPGELEEEEEEEEEEEEEEEEAAAAAAANVDDVVVVEEVEEEAGRELDSDSHYGPQHLESIDDEEDEEAKAWLQAHPGRILPPLSPPQHRYSEGERTSLEKIVPLTCHVWQQIVYQGNSRTQISDTNVVCLETTAQRGSGDDQKTESWHCLPQEMDSSQTLDTSQTRFNVRTEDTEVTDFPSLEEGILTQSENQVKEPNRDLFCSPLLVIQDSFASPDLPLLTCLTQDQEFAPDSLFHQSELSFAPLRGIPDKSEDTEWSSRPSEVSEALFQATAEVASDLASSRFSVSQHPLIGSTAVGSQCPFLPSEQGNNEETISSVDELKIPKDCDRYDDLCSYMSWKTRKDTQWPENNLADKDQVSVATSFDITDENIATKRSDHFDAARSYGQYWTQEDSSKQAETYLTKGLQGKVESDVITLDGLNENAVVCSERVAELQRKPTRESEYHSSDLRMLRMSPDTVPKAPKHLKAGDTSKGGIAKVTQSNLKSGITTTPVDSDIGSHLSLSLEDLSQLAVSSPLETTTGQHTDTLNQKTLADTHLTEETLKVTAIPEPADQKTATPTVLSSSHSHRGKPSIFYQQGLPDSHLTEEALKVSAAPGLADQTTGMSTLTSTSYSHREKPGTFYQQELPESNLTEEPLEVSAAPGPVEQKTGIPTVSSTSHSHVEDLLFFYRQTLPDGHLTDQALKVSAVSGPADQKTGTATVLSTPHSHREKPGIFYQQEFADSHQTEETLTKVSATPGPADQKTEIPAVQSSSYSQREKPSILYPQDLADSHLPEEGLKVSAVAGPADQKTGLPTVPSSAYSHREKLLVFYQQALLDSHLPEEALKVSAVSGPADGKTGTPAVTSTSSASSSLGEKPSAFYQQTLPNSHLTEEALKVSIVPGPGDQKTGIPSAPSSFYSHREKPIIFSQQTLPDFLFPEEALKVSAVSVLAAQKTGTPTVSSNSHSHSEKSSVFYQQELPDSDLPRESLKMSAIPGLTDQKTVPTPTVPSGSFSHREKPSIFYQQEWPDSYATEKALKVSTGPGPADQKTEIPAVQSSSYPQREKPSVLYPQVLSDSHLPEESLKVSAFPGPADQMTDTPAVPSTFYSQREKPGIFYQQTLPESHLPKEALKISVAPGLADQKTGTPTVTSTSYSQHREKPSIFHQQALPGTHIPEEAQKVSAVTGPGNQKTWIPRVLSTFYSQREKPGIFYQQTLPGSHIPEEAQKVSPVLGPADQKTGTPTPTSASYSHTEKPGIFYQQVLPDNHPTEEALKISVASEPVDQTTGTPAVTSTSYSQYREKPSIFYQQSLPSSHLTEEAKNVSAVPGPADQKTVIPILPSTFYSHTEKPGVFYQQVLPHSHPTEEALKISVASEPVDQTTGTPTVTSTSYSQHTEKPSIFYQQSLPGSHLTEEAKNVSAVPGPGDRKTGIPTLPSTFYSHTEKPGSFYQQVLPHSHLPEEALEVSVAPGPVDQTIGTPTVTSPSSSFGEKPIVIYKQAFPEGHLPEESLKVSVAPGPVGQTTGAPTITSPSYSQHRAKSGSFYQLALLGSQIPEEALRVSSAPGPADQTTGIPTITSTSYSFGEKPIVNYKQAFPDGHLPEEALKVSIVSGPTEKKTDIPAGPLGSSALGEKPITFYRQALLDSPLNKEVVKVSAAPGPADQKTETLPVHSTSYSNRGKPVIFYQQTLSDSHLPEEALKVPPVPGPDAQKTETPSVSSSLYSYREKPIVFYQQALPDSELTQEALKVSAVPQPADQKTGLSTVTSSFYSHTEKPNISYQQELPDSHLTEEALKVSNVPGPADQKTGVSTVTSTSYSHREKPIVSYQRELPHFTEAGLKILRVPGPADQKTGINILPSNSYPQREHSVISYEQELPDLTEVTLKAIGVPGPADQKTGIQIASSSSYSNREKASIFHQQELPDVTEEALNVFVVPGQGDRKTEIPTVPLSYYSRREKPSVISQQELPDSHLTEEALKVSPVSIPAEQKTGIPIGLSSSYSHSHKEKLKISTVHIPDDQKTEFPAATLSSYSQIEKPKISTVIGPNDQKTPSQTAFHSSYSQTVKPNILFQQQLPDRDQSKGILKISAVPELTDVNTGKPVSLSSSYFHREKSNIFSPQELPGSHVTEDVLKVSTIPGPAGQKTVLPTALPSSFSHREKPDIFYQKDLPDRHLTEDALKISSALGQADQITGLQTVPSGTYSHGENHKLVSEHVQRLIDNLNSSDSSVSSNNVLLNSQADDRVVINKPESAGFRDVGSEEIQDAENSAKTLKEIRTLLMEAENMALKRCNFPAPLARFRDISDISFIQSKKVVCFKEPSSTGVSNGDLLHRQPFTEESPSSRCIQKDIGTQTNLKCRRGIENWEFISSTTVRSPLQEAESKVSMALEETLRQYQAAKSVMRSEPEGCSGTIGNKIIIPMMTVIKSDSSSDASDGNGSCSWDSNLPESLESVSDVLLNFFPYVSPKTSITDSREEEGVSESEDGGGSSVDSLAAHVKNLLQCESSLNHAKEILRNAEEEESRVRAHAWNMKFNLAHDCGYSISELNEDDRRKVEEIKAELFGHGRTTDLSKGLQSPRGMGCKPEAVCSHIIIESHEKGCFRTLTSEHPQLDRHPCAFRSAGPSEMTRGRQNPSSCRAKHVNLSASLDQNNSHFKVWNSLQLKSHSPFQNFIPDEFKISKGLRMPFDEKMDPWLSELVEPAFVPPKEVDFHSSSQMPSPEPMKKFTTSITFSSHRHSKCISNSSVVKVGVTEGSQCTGASVGVFNSHFTEEQNPPRDLKQKTSSPSSFKMHSNSQDKEVTILAEGRRQSQKLPVDFERSFQEEKPLERSDFTGSHSEPSTRANCSNFKEIQISDNHTLISMGRPSSTLGVNRSSSRLGVKEKNVTITPDLPSCIFLEQRELFEQSKAPRADDHVRKHHSPSPQHQDYVAPDLPSCIFLEQRELFEQCKAPYVDHQMRENHSPLPQGQDSIASDLPSPISLEQCQSKAPGVDDQMNKHHFPLPQGQDCVVEKNNQHKPKSHISNINVEAKFNTVVSQSAPNHCTLAASASTPPSNRKALSCVHITLCPKTSSKLDSGTLDERFHSLDAASKARMNSEFNFDLHTVSSRSLEPTSKLLTSKPVAQDQESLGFLGPKSSLDFQVVQPSLPDSNTITQDLKTIPSQNSQIVTSRQIQVNISDFEGHSNPEGTPVFADRLPEKMKTPLSAFSEKLSSDAVTQITTESPEKTLFSSEIFINAEDRGHEIIEPGNQKLRKAPVKFASSSSVQQVTFSRGTDGQPLLLPYKPSGSTKMYYVPQLRQIPPSPDSKSDTTVESSHSGSNDAIAPDFPAQVLGTRDDDLSATVNIKHKEGIYSKRVVTKASLPVGEKPLQNENADASVQVLITGDENLSDKKQQEIHSTRAVTEAAQAKEKESLQKDTADSSAAAAAEHSAQVGDPEMKNLPDTKAITQKEEIHRKKTVPEEAWPNNKESLQINIEESECHSEFENTTRSVFRSAKFYIHHPVHLPSDQDICHESLGKSVFMRHSWKDFFQHHPDKHREHMCLPLPYQNMDKTKTDYTRIKSLSINVNLGNKEVMDTTKSQVRDYPKHNGQISDPQRDQKVTPEQTTQHTVSLNELWNKYRERQRQQRQPELGDRKELSLVDRLDRLAKILQNPITHSLQVSESTHDDSRGERSVKEWSGRQQQRNKLQKKKRFKSLEKSHKNTGELKKSKVLSHHRAGRSNQIKIEQIKFDKYILSKQPGFNYISNTSSDCRPSEESELLTDTTTNILSGTTSTVESDILTQTDREVALHERSSSVSTIDTARLIQAFGHERVCLSPRRIKLYSSITNQQRRYLEKRSKHSKKVLNTGHPLVTSEHTRRRHIQVANHVISSDSISSSASSFLSSNSTFCNKQNVHMLNKGIQAGNLEIVNGAKKHTRDVGITFPTPSSSEAKLEENSDVTSWSEEKREEKMLFTGYPEDRKLKKNKKNSHEGVSWFVPVENVESRSKKENVPNTCGPGISWFEPITKTRPWREPLREQNCQGQHLDGRGYLAGPGREAGRDLLRPFVRATLQESLQFHRPDFISRSGERIKRLKLIVQERKLQSMLQTERDALFNIDRERQGHQNRMCPLPKRVFLAIQKNKPISKKEMIQRSKRIYEQLPEVQKKREEEKRKSEYKSYRLRAQLYKKRVTNQLLGRKVPWD.

The segment covering 1-29 has biased composition (acidic residues); that stretch reads MEPEDLPWPGELEEEEEEEEEEEEEEEEA. The segment at 1-69 is disordered; that stretch reads MEPEDLPWPG…YGPQHLESID (69 aa). Over residues 30-40 the composition is skewed to low complexity; that stretch reads AAAAAANVDDV. Basic and acidic residues predominate over residues 49–58; sequence EAGRELDSDS. Serine 464 is modified (phosphoserine). 34 tandem repeats follow at residues 539–585, 586–632, 633–679, 680–726, 727–774, 775–821, 822–871, 872–918, 919–965, 966–1013, 1014–1060, 1061–1107, 1108–1155, 1156–1202, 1203–1249, 1250–1297, 1298–1344, 1345–1392, 1393–1439, 1440–1486, 1487–1534, 1535–1581, 1582–1628, 1629–1675, 1676–1722, 1723–1769, 1770–1816, 1817–1861, 1862–1906, 1907–1951, 1952–1999, 2060–2105, 2106–2152, and 2153–2200. Residues 539–2200 are 34 X 47 AA approximate tandem repeat; the sequence is QKTLADTHLT…HGENHKLVSE (1662 aa). 2 disordered regions span residues 558 to 579 and 606 to 625; these read PEPA…SHRG and GLAD…YSHR. Composition is skewed to polar residues over residues 564–574 and 609–622; these read KTATPTVLSSS and DQTT…STSY. Disordered stretches follow at residues 699-718 and 735-769; these read SGPA…PHSH and QTEE…QREK. Residues 705 to 715 show a composition bias toward polar residues; that stretch reads KTGTATVLSTP. Positions 841-865 are disordered; it reads SGPADGKTGTPAVTSTSSASSSLGE. Disordered stretches follow at residues 946 to 969, 983 to 1007, and 1027 to 1055; these read GTPT…QQEL, AIPG…SHRE, and LKVS…QREK. The segment covering 989–1003 has biased composition (polar residues); it reads DQKTVPTPTVPSGSF. Position 1189 is a phosphoserine (serine 1189). A disordered region spans residues 1221–1241; that stretch reads VLGPADQKTGTPTPTSASYSH. Positions 1228–1240 are enriched in polar residues; sequence KTGTPTPTSASYS. Positions 1786-1806 are disordered; sequence SNVPGPADQKTGVSTVTSTSY. Positions 1796–1806 are enriched in low complexity; that stretch reads TGVSTVTSTSY. Phosphoserine is present on serine 2143. 2 disordered regions span residues 2456–2477 and 2600–2621; these read ITDS…SSVD and HPCA…NPSS. Serine 2466 is modified (phosphoserine). Serine 2632 bears the Phosphoserine mark. Disordered regions lie at residues 2753-2828, 2892-2912, 3283-3310, 3389-3426, 3566-3594, and 3643-3704; these read HFTE…STRA, KAPR…QHQD, RQIP…AIAP, EAAQ…MKNL, QVRD…TTQH, and SLQV…HRAG. A compositionally biased stretch (basic and acidic residues) spans 2754-2766; it reads FTEEQNPPRDLKQ. Polar residues predominate over residues 2767-2779; the sequence is KTSSPSSFKMHSN. Composition is skewed to basic and acidic residues over residues 2780–2793 and 2800–2816; these read SQDK…EGRR and VDFE…ERSD. Serine 2805 bears the Phosphoserine mark. Residues 2817-2828 are compositionally biased toward polar residues; it reads FTGSHSEPSTRA. The span at 3294-3305 shows a compositional bias: polar residues; the sequence is DTTVESSHSGSN. The span at 3392–3404 shows a compositional bias: basic and acidic residues; it reads QAKEKESLQKDTA. The segment covering 3405 to 3416 has biased composition (low complexity); that stretch reads DSSAAAAAEHSA. 2 stretches are compositionally biased toward basic and acidic residues: residues 3649-3664 and 3680-3694; these read STHD…KEWS and KSLE…ELKK. Positions 3695 to 3704 are enriched in basic residues; the sequence is SKVLSHHRAG. The tract at residues 4036–4167 is ALMS motif; it reads TLQESLQFHR…NQLLGRKVPW (132 aa).

This sequence belongs to the ALMS1 family. In terms of tissue distribution, expressed in all tissues tested including adipose and pancreas. Expressed by beta-cells of the islets in the pancreas (at protein level).

Its subcellular location is the cytoplasm. The protein resides in the cytoskeleton. It localises to the microtubule organizing center. The protein localises to the centrosome. It is found in the cilium basal body. Its subcellular location is the spindle pole. Functionally, involved in PCM1-dependent intracellular transport. Required, directly or indirectly, for the localization of NCAPD2 to the proximal ends of centrioles. Required for proper formation and/or maintenance of primary cilia (PC), microtubule-based structures that protrude from the surface of epithelial cells. This Homo sapiens (Human) protein is Centrosome-associated protein ALMS1 (ALMS1).